Reading from the N-terminus, the 70-residue chain is Small ribosomal subunit protein bS18c (70 aa).

This sequence belongs to the bacterial ribosomal protein bS18 family. Part of the 30S ribosomal subunit.

The protein resides in the plastid. Its subcellular location is the chloroplast. This Gracilaria tenuistipitata var. liui (Red alga) protein is Small ribosomal subunit protein bS18c.